Here is a 72-residue protein sequence, read N- to C-terminus: Translation initiation factor IF-1 (72 aa).

One can recognise an S1-like domain in the interval methionine 1–lysine 72.

Belongs to the IF-1 family. Component of the 30S ribosomal translation pre-initiation complex which assembles on the 30S ribosome in the order IF-2 and IF-3, IF-1 and N-formylmethionyl-tRNA(fMet); mRNA recruitment can occur at any time during PIC assembly.

It localises to the cytoplasm. Its function is as follows. One of the essential components for the initiation of protein synthesis. Stabilizes the binding of IF-2 and IF-3 on the 30S subunit to which N-formylmethionyl-tRNA(fMet) subsequently binds. Helps modulate mRNA selection, yielding the 30S pre-initiation complex (PIC). Upon addition of the 50S ribosomal subunit IF-1, IF-2 and IF-3 are released leaving the mature 70S translation initiation complex. The protein is Translation initiation factor IF-1 of Ligilactobacillus salivarius (strain UCC118) (Lactobacillus salivarius).